The primary structure comprises 259 residues: Complement factor D (259 aa).

The signal sequence occupies residues 1-21; the sequence is MADRSGHLAALILLGAAVCVA. The propeptide at 22–26 is activation peptide; that stretch reads QPRGR. The Peptidase S1 domain maps to 27-254; that stretch reads ILGGQEAKSH…YVAWIDGVMA (228 aa). Cys-52 and Cys-68 form a disulfide bridge. Active-site charge relay system residues include His-67 and Asp-115. Cystine bridges form between Cys-149–Cys-215, Cys-180–Cys-196, and Cys-205–Cys-230. The active-site Charge relay system is the Ser-209. Residues 224–228 form a self-inhibitor loop region; sequence TSGSR.

The protein belongs to the peptidase S1 family. Post-translationally, CFD is activated by the removal of 5 residues at the N-terminus, named activation peptide, by the MASP-3 isoform of MASP1.

It localises to the secreted. It catalyses the reaction Selective cleavage of Arg-|-Lys bond in complement factor B when in complex with complement subcomponent C3b or with cobra venom factor.. Circulates in plasma in a mature but self-inhibited form. Activated by factor B (CFB), which displaces the self-inhibition loop. Associates with CFB complexed with complement C3b. Its function is as follows. Serine protease that initiates the alternative pathway of the complement system, a cascade of proteins that leads to phagocytosis and breakdown of pathogens and signaling that strengthens the adaptive immune system. In contrast to other complement pathways (classical, lectin and GZMK) that are directly activated by pathogens or antigen-antibody complexes, the alternative complement pathway is initiated by the spontaneous hydrolysis of complement C3. The alternative complement pathway acts as an amplification loop that enhances complement activation by mediating the formation of C3 and C5 convertases. Activated CFD cleaves factor B (CFB) when the latter is complexed with complement C3b, activating the C3 convertase of the alternative pathway. This chain is Complement factor D (CFD), found in Sus scrofa (Pig).